The chain runs to 373 residues: Anhydro-N-acetylmuramic acid kinase (373 aa).

12 to 19 (GTSLDGVD) serves as a coordination point for ATP.

This sequence belongs to the anhydro-N-acetylmuramic acid kinase family.

The enzyme catalyses 1,6-anhydro-N-acetyl-beta-muramate + ATP + H2O = N-acetyl-D-muramate 6-phosphate + ADP + H(+). Its pathway is amino-sugar metabolism; 1,6-anhydro-N-acetylmuramate degradation. It functions in the pathway cell wall biogenesis; peptidoglycan recycling. Catalyzes the specific phosphorylation of 1,6-anhydro-N-acetylmuramic acid (anhMurNAc) with the simultaneous cleavage of the 1,6-anhydro ring, generating MurNAc-6-P. Is required for the utilization of anhMurNAc either imported from the medium or derived from its own cell wall murein, and thus plays a role in cell wall recycling. This Salmonella agona (strain SL483) protein is Anhydro-N-acetylmuramic acid kinase.